The following is an 808-amino-acid chain: Type VI secretion system spike protein VgrG4b (808 aa).

It belongs to the VgrG protein family.

The protein localises to the secreted. Part of the H2 type VI secretion system (H2-T6SS) specialized secretion system, which delivers several virulence factors in both prokaryotic and eukaryotic cells during infection. Allows the delivery of the phospholipase effector PldA to target cells where it exerts its toxicity. This Pseudomonas aeruginosa (strain ATCC 15692 / DSM 22644 / CIP 104116 / JCM 14847 / LMG 12228 / 1C / PRS 101 / PAO1) protein is Type VI secretion system spike protein VgrG4b.